The primary structure comprises 513 residues: Maturase K (513 aa).

The protein belongs to the intron maturase 2 family. MatK subfamily.

The protein localises to the plastid. It is found in the chloroplast. Functionally, usually encoded in the trnK tRNA gene intron. Probably assists in splicing its own and other chloroplast group II introns. This Sporobolus michauxianus (Prairie cordgrass) protein is Maturase K.